Reading from the N-terminus, the 332-residue chain is Clavesin-1 (332 aa).

Residues 96-257 (IKRALMDGFP…EFGGTLPPYD (162 aa)) enclose the CRAL-TRIO domain. The disordered stretch occupies residues 300–332 (KYMKRSHSVVEPGTLRHEEERENENTQPLLALD). A compositionally biased stretch (basic and acidic residues) spans 313–323 (TLRHEEERENE).

The protein resides in the golgi apparatus. It localises to the trans-Golgi network membrane. It is found in the early endosome membrane. The protein localises to the cytoplasmic vesicle. Its subcellular location is the clathrin-coated vesicle. Required for normal morphology of late endosomes and/or lysosomes in neurons. Binds phosphatidylinositol 3,5-bisphosphate (PtdIns(3,5)P2). The sequence is that of Clavesin-1 (clvs1) from Xenopus laevis (African clawed frog).